Consider the following 273-residue polypeptide: Vitamin B12-binding protein (273 aa).

An N-terminal signal peptide occupies residues 1-18; that stretch reads MMKTLSSLLLLFSVSLQA. Residues 23–273 enclose the Fe/B12 periplasmic-binding domain; sequence RVISLAPHAT…EHFASIEQKR (251 aa). Cys-183 and Cys-263 are oxidised to a cystine.

Belongs to the BtuF family. In terms of assembly, the complex is composed of two ATP-binding proteins (BtuD), two transmembrane proteins (BtuC) and a solute-binding protein (BtuF).

Its subcellular location is the periplasm. Functionally, part of the ABC transporter complex BtuCDF involved in vitamin B12 import. Binds vitamin B12 and delivers it to the periplasmic surface of BtuC. This is Vitamin B12-binding protein from Vibrio vulnificus (strain YJ016).